Here is a 114-residue protein sequence, read N- to C-terminus: Protein preY, mitochondrial (114 aa).

Residues 1 to 35 (MLSGARCRLASALRGTRAPPSAVARRCLHASGSRP) constitute a mitochondrion transit peptide. The interval 14–49 (RGTRAPPSAVARRCLHASGSRPLADRGKKTEEPPRD) is disordered. The segment covering 36 to 49 (LADRGKKTEEPPRD) has biased composition (basic and acidic residues). The TRM112 domain occupies 51-97 (DPALLEFLVCPLSKKPLRYEASTNELINEELGIAYPIIDGIPNMIPQ).

It belongs to the PREY family. As to quaternary structure, interacts (via TRM112 domain) with NDUFAF5; the interaction is direct and stabilizes NDUFAF5 protein. Interacts with COQ5; the interaction is direct, stabilizes COQ5 protein and associates PYURF with COQ enzyme complex.

Its subcellular location is the mitochondrion. In mitochondria, S-adenosylmethionine-dependent methyltransferase chaperone that supports both coenzyme Q biosynthesis, by stabilizing its components, such as COQ5, and NADH:ubiquinone oxidoreductase complex (complex I, MT-ND1) assembly, by stabilizing complex I assembly factors, such as NDUFAF5. This chain is Protein preY, mitochondrial, found in Homo sapiens (Human).